The following is a 392-amino-acid chain: Elongation factor Tu (392 aa).

One can recognise a tr-type G domain in the interval 10–202; sequence KVHVNVGTIG…VLDEYIEDPI (193 aa). Residues 19-26 form a G1 region; sequence GHVDHGKT. 19–26 is a binding site for GTP; sequence GHVDHGKT. Threonine 26 contributes to the Mg(2+) binding site. The G2 stretch occupies residues 60 to 64; sequence GITIN. The interval 81-84 is G3; it reads DCPG. GTP contacts are provided by residues 81 to 85 and 136 to 139; these read DCPGH and NKCD. A G4 region spans residues 136 to 139; the sequence is NKCD. Residues 174–176 form a G5 region; it reads SAL.

Belongs to the TRAFAC class translation factor GTPase superfamily. Classic translation factor GTPase family. EF-Tu/EF-1A subfamily. Monomer.

It localises to the cytoplasm. The enzyme catalyses GTP + H2O = GDP + phosphate + H(+). GTP hydrolase that promotes the GTP-dependent binding of aminoacyl-tRNA to the A-site of ribosomes during protein biosynthesis. This Phytoplasma mali (strain AT) protein is Elongation factor Tu.